We begin with the raw amino-acid sequence, 37 residues long: Cytochrome b6-f complex subunit 7 (37 aa).

The chain crosses the membrane as a helical span at residues A11–L29.

It belongs to the PetM family. In terms of assembly, the 4 large subunits of the cytochrome b6-f complex are cytochrome b6, subunit IV (17 kDa polypeptide, PetD), cytochrome f and the Rieske protein, while the 4 small subunits are PetG, PetL, PetM and PetN. The complex functions as a dimer.

Its subcellular location is the cellular thylakoid membrane. Component of the cytochrome b6-f complex, which mediates electron transfer between photosystem II (PSII) and photosystem I (PSI), cyclic electron flow around PSI, and state transitions. This Rippkaea orientalis (strain PCC 8801 / RF-1) (Cyanothece sp. (strain PCC 8801)) protein is Cytochrome b6-f complex subunit 7.